A 792-amino-acid chain; its full sequence is RAD50-interacting protein 1 (792 aa).

The segment at 1-22 (MLPAGEIGASPAAPCCSESGDE) is disordered. Positions 103-124 (IRSALKNAEESKQFLNQFLEQE) form a coiled coil. The RINT1/TIP20 domain occupies 220 to 792 (WHKILKDKLT…LRTNWPNTGK (573 aa)).

This sequence belongs to the RINT1 family. In terms of assembly, component of the NRZ complex composed of NBAS, ZW10 and RINT1/TIP20L; NRZ associates with SNAREs STX18, USE1L, BNIP1/SEC20L and SEC22B (the assembly has been described as syntaxin 18 complex). Interacts directly with BNIP1/SEC20L and ZW10. Interacts with UVRAG. Interacts with RAD50 during late S and G2/M phases. Interacts with RBL2, preferentially with the active, hypophosphorylated form.

It is found in the cytoplasm. It localises to the endoplasmic reticulum membrane. Its function is as follows. Involved in regulation of membrane traffic between the Golgi and the endoplasmic reticulum (ER); the function is proposed to depend on its association in the NRZ complex which is believed to play a role in SNARE assembly at the ER. May play a role in cell cycle checkpoint control. Essential for telomere length control. The polypeptide is RAD50-interacting protein 1 (RINT1) (Homo sapiens (Human)).